We begin with the raw amino-acid sequence, 120 residues long: Acyl carrier protein, mitochondrial (120 aa).

Residues Lys43–Pro117 form the Carrier domain. Ser77 is subject to O-(pantetheine 4'-phosphoryl)serine.

This sequence belongs to the acyl carrier protein (ACP) family. Complex I is composed of about 45 different subunits. In terms of processing, 4'-phosphopantetheine is transferred from CoA to a specific serine of apo-ACP by acpS. This modification is essential for activity because fatty acids are bound in thioester linkage to the sulfhydryl of the prosthetic group.

It is found in the mitochondrion. It participates in lipid metabolism; fatty acid biosynthesis. Its function is as follows. Carrier of the growing fatty acid chain in fatty acid biosynthesis. May be involved in the synthesis of very-long-chain fatty acids. Accessory and non-catalytic subunit of the mitochondrial membrane respiratory chain NADH dehydrogenase (Complex I), which functions in the transfer of electrons from NADH to the respiratory chain. The chain is Acyl carrier protein, mitochondrial (ndufab1) from Dictyostelium discoideum (Social amoeba).